Consider the following 167-residue polypeptide: ATP synthase subunit b (167 aa).

A helical transmembrane segment spans residues 15–37 (FWQTVIFLVTLYLLSKFAWGPIM).

The protein belongs to the ATPase B chain family. F-type ATPases have 2 components, F(1) - the catalytic core - and F(0) - the membrane proton channel. F(1) has five subunits: alpha(3), beta(3), gamma(1), delta(1), epsilon(1). F(0) has three main subunits: a(1), b(2) and c(10-14). The alpha and beta chains form an alternating ring which encloses part of the gamma chain. F(1) is attached to F(0) by a central stalk formed by the gamma and epsilon chains, while a peripheral stalk is formed by the delta and b chains.

Its subcellular location is the cell inner membrane. F(1)F(0) ATP synthase produces ATP from ADP in the presence of a proton or sodium gradient. F-type ATPases consist of two structural domains, F(1) containing the extramembraneous catalytic core and F(0) containing the membrane proton channel, linked together by a central stalk and a peripheral stalk. During catalysis, ATP synthesis in the catalytic domain of F(1) is coupled via a rotary mechanism of the central stalk subunits to proton translocation. Functionally, component of the F(0) channel, it forms part of the peripheral stalk, linking F(1) to F(0). In Cytophaga hutchinsonii (strain ATCC 33406 / DSM 1761 / CIP 103989 / NBRC 15051 / NCIMB 9469 / D465), this protein is ATP synthase subunit b.